A 166-amino-acid chain; its full sequence is Small ribosomal subunit protein uS5 (166 aa).

Residues 11-74 enclose the S5 DRBM domain; that stretch reads LQEKLIAVNR…EKARRNMINV (64 aa).

The protein belongs to the universal ribosomal protein uS5 family. In terms of assembly, part of the 30S ribosomal subunit. Contacts proteins S4 and S8.

Functionally, with S4 and S12 plays an important role in translational accuracy. In terms of biological role, located at the back of the 30S subunit body where it stabilizes the conformation of the head with respect to the body. The polypeptide is Small ribosomal subunit protein uS5 (Haemophilus influenzae (strain 86-028NP)).